The primary structure comprises 271 residues: Proteasome inhibitor PI31 subunit (271 aa).

An N-acetylalanine modification is found at Ala2. Residues 2–150 (AGLEVLFASA…PIHEQWEKAN (149 aa)) form an important for homodimerization and interaction with FBXO7 region. Residue Ser153 is modified to Phosphoserine. Arg205 bears the Omega-N-methylarginine mark. At Arg219 the chain carries Asymmetric dimethylarginine. The interval 222 to 271 (IDPSSGLPNRLPPGAVPPGARFDPFGPIGTSPPGPNPDHLPPPGYDDMYL) is disordered. Arg231 is modified (omega-N-methylarginine). The span at 251 to 265 (TSPPGPNPDHLPPPG) shows a compositional bias: pro residues. A Phosphoserine modification is found at Ser252.

It belongs to the proteasome inhibitor PI31 family. Monomer and homodimer. Interacts with FBXO7.

Its subcellular location is the cytoplasm. It localises to the endoplasmic reticulum. Plays an important role in control of proteasome function. Inhibits the hydrolysis of protein and peptide substrates by the 20S proteasome. Also inhibits the activation of the proteasome by the proteasome regulatory proteins PA700 and PA28. This Pongo abelii (Sumatran orangutan) protein is Proteasome inhibitor PI31 subunit (PSMF1).